A 379-amino-acid polypeptide reads, in one-letter code: Intracellular hyaluronan-binding protein 4.S (379 aa).

Disordered regions lie at residues 52-260 (THRK…FSQE) and 332-379 (SLAR…PALA). The segment covering 71 to 81 (GKKESQKDRKA) has biased composition (basic and acidic residues). Residues 107–116 (KVTQNENVDS) are compositionally biased toward polar residues. 2 stretches are compositionally biased toward basic and acidic residues: residues 118–133 (VKVD…REVR) and 139–158 (RSAE…DKQM). The span at 162-174 (GGRGGMRGRGRGG) shows a compositional bias: gly residues. Over residues 179 to 208 (TESDNLRGKREFDRHSGSDRARMRPEDKRG) the composition is skewed to basic and acidic residues. Acidic residues-rich tracts occupy residues 232-241 (EQVETTETEA) and 368-379 (NPDDPEDFPALA).

The protein belongs to the SERBP1-HABP4 family. In terms of assembly, associates with ribosomes; promoting ribosome stabilization. Interacts with eef2/eEF2; promoting ribosome stabilization.

The protein resides in the nucleus. It is found in the cytoplasm. Its subcellular location is the stress granule. The protein localises to the nucleolus. It localises to the nucleus speckle. The protein resides in the cajal body. In terms of biological role, ribosome-binding protein that promotes ribosome hibernation, a process during which ribosomes are stabilized in an inactive state and preserved from proteasomal degradation. Acts via its association with eef2/eEF2 factor at the A-site of the ribosome, promoting ribosome stabilization in an inactive state compatible with storage. Plays a key role in ribosome hibernation in the mature egg by promoting ribosome stabilization. Ribosomes, which are produced in large quantities during oogenesis, are stored and translationally repressed in the egg and early embryo. This is Intracellular hyaluronan-binding protein 4.S from Xenopus laevis (African clawed frog).